Reading from the N-terminus, the 480-residue chain is Sensor histidine kinase CusS (480 aa).

Over 1-15 the chain is Cytoplasmic; it reads MVSKPFQRPFSLATR. A helical membrane pass occupies residues 16–36; that stretch reads LTFFISLATIAAFFAFAWIMI. Over 37–186 the chain is Periplasmic; the sequence is HSVKVHFAEQ…LHYINDLMNK (150 aa). The helical transmembrane segment at 187–207 threads the bilayer; that stretch reads LIMTASVISILIVFIVLLAVH. One can recognise an HAMP domain in the interval 208-260; sequence KGHAPIRSVSRQIQNITSKDLDVRLDPQTVPIELEQLVLSFNHMIERIEDVFT. At 208–480 the chain is on the cytoplasmic side; the sequence is KGHAPIRSVS…GTRFVITLPA (273 aa). Residues 268–480 enclose the Histidine kinase domain; that stretch reads DIAHEIRTPI…GTRFVITLPA (213 aa). Phosphohistidine; by autocatalysis is present on His271.

In terms of processing, autophosphorylated.

It is found in the cell inner membrane. The catalysed reaction is ATP + protein L-histidine = ADP + protein N-phospho-L-histidine.. Member of the two-component regulatory system CusS/CusR involved in response to copper and silver. Acts as a copper/silver ion sensor. Activates CusR by phosphorylation. In Escherichia coli (strain K12), this protein is Sensor histidine kinase CusS (cusS).